The sequence spans 376 residues: Erythronate-4-phosphate dehydrogenase (376 aa).

Residues serine 45 and threonine 67 each contribute to the substrate site. NAD(+) is bound by residues 127–128 (QV), aspartate 147, and threonine 176. Arginine 209 is an active-site residue. Aspartate 233 is a binding site for NAD(+). The active site involves glutamate 238. Histidine 255 functions as the Proton donor in the catalytic mechanism. Glycine 258 is an NAD(+) binding site. Residue tyrosine 259 participates in substrate binding.

The protein belongs to the D-isomer specific 2-hydroxyacid dehydrogenase family. PdxB subfamily. Homodimer.

It is found in the cytoplasm. The enzyme catalyses 4-phospho-D-erythronate + NAD(+) = (R)-3-hydroxy-2-oxo-4-phosphooxybutanoate + NADH + H(+). The protein operates within cofactor biosynthesis; pyridoxine 5'-phosphate biosynthesis; pyridoxine 5'-phosphate from D-erythrose 4-phosphate: step 2/5. In terms of biological role, catalyzes the oxidation of erythronate-4-phosphate to 3-hydroxy-2-oxo-4-phosphonooxybutanoate. In Aliivibrio salmonicida (strain LFI1238) (Vibrio salmonicida (strain LFI1238)), this protein is Erythronate-4-phosphate dehydrogenase.